The following is a 760-amino-acid chain: Anti-sigma-I factor RsgI6 (760 aa).

Topologically, residues 1–55 are cytoplasmic; the sequence is MIVGKVLDMDEKTAIIMTDDFAFLNVVRTSEMAVGKKVKVLDSDIIKPKNSLRRY. Residues 2-49 enclose the RsgI N-terminal anti-sigma domain; sequence IVGKVLDMDEKTAIIMTDDFAFLNVVRTSEMAVGKKVKVLDSDIIKPK. Residues 56–76 traverse the membrane as a helical segment; that stretch reads LPVAAVAACFVIVLSFVLMFI. Over 77-760 the chain is Extracellular; it reads NGNTARKNIY…GTLQTTYRIP (684 aa). The tract at residues 274-352 is disordered; the sequence is AINTGPAESA…STPKPVSPVQ (79 aa). The span at 291–352 shows a compositional bias: polar residues; it reads LPATSTPGRT…STPKPVSPVQ (62 aa). A GH10 domain is found at 402–701; that stretch reads DSSNKPIENA…NEAGRRFESL (300 aa). Catalysis depends on Glu538, which acts as the Proton donor. Glu635 acts as the Nucleophile in catalysis.

This sequence in the C-terminal section; belongs to the glycosyl hydrolase 10 (cellulase F) family. Interacts (via RsgI N-terminal anti-sigma domain) with SigI6.

It localises to the cell membrane. The catalysed reaction is Endohydrolysis of (1-&gt;4)-beta-D-xylosidic linkages in xylans.. It participates in glycan degradation; xylan degradation. Functionally, anti-sigma factor for SigI6. Negatively regulates SigI6 activity through direct interaction. Binding of the polysaccharide substrate to the extracellular C-terminal sensing domain of RsgI6 may induce a conformational change in its N-terminal cytoplasmic region, leading to the release and activation of SigI6. Binds to and hydrolyzes insoluble and soluble xylan substrates. Has low enzymatic activity. The chain is Anti-sigma-I factor RsgI6 from Acetivibrio thermocellus (strain ATCC 27405 / DSM 1237 / JCM 9322 / NBRC 103400 / NCIMB 10682 / NRRL B-4536 / VPI 7372) (Clostridium thermocellum).